A 937-amino-acid polypeptide reads, in one-letter code: Isoleucine--tRNA ligase (937 aa).

Positions 58–68 match the 'HIGH' region motif; it reads PYANGTLHLGH. L-isoleucyl-5'-AMP is bound at residue Glu561. A 'KMSKS' region motif is present at residues 602 to 606; the sequence is KMSKS. Lys605 contributes to the ATP binding site. Zn(2+)-binding residues include Cys900, Cys903, Cys920, and Cys923.

It belongs to the class-I aminoacyl-tRNA synthetase family. IleS type 1 subfamily. As to quaternary structure, monomer. The cofactor is Zn(2+).

It is found in the cytoplasm. It carries out the reaction tRNA(Ile) + L-isoleucine + ATP = L-isoleucyl-tRNA(Ile) + AMP + diphosphate. Catalyzes the attachment of isoleucine to tRNA(Ile). As IleRS can inadvertently accommodate and process structurally similar amino acids such as valine, to avoid such errors it has two additional distinct tRNA(Ile)-dependent editing activities. One activity is designated as 'pretransfer' editing and involves the hydrolysis of activated Val-AMP. The other activity is designated 'posttransfer' editing and involves deacylation of mischarged Val-tRNA(Ile). In Histophilus somni (strain 2336) (Haemophilus somnus), this protein is Isoleucine--tRNA ligase.